The chain runs to 345 residues: Heat-inducible transcription repressor HrcA (345 aa).

It belongs to the HrcA family.

Functionally, negative regulator of class I heat shock genes (grpE-dnaK-dnaJ and groELS operons). Prevents heat-shock induction of these operons. This Lachnoclostridium phytofermentans (strain ATCC 700394 / DSM 18823 / ISDg) (Clostridium phytofermentans) protein is Heat-inducible transcription repressor HrcA.